The chain runs to 24 residues: N-acyl-L-amino acid amidohydrolase (24 aa).

This sequence belongs to the peptidase M20 family. As to quaternary structure, homotetramer. It depends on Co(2+) as a cofactor.

The enzyme catalyses an N-acyl-L-amino acid + H2O = an L-alpha-amino acid + a carboxylate. It catalyses the reaction an N-acetyl-L-cysteine-S-conjugate + H2O = an S-substituted L-cysteine + acetate. The sequence is that of N-acyl-L-amino acid amidohydrolase from Parageobacillus thermoglucosidasius (Geobacillus thermoglucosidasius).